The following is a 454-amino-acid chain: tRNA modification GTPase MnmE (454 aa).

Positions 23, 80, and 120 each coordinate (6S)-5-formyl-5,6,7,8-tetrahydrofolate. Residues 216–377 (GMKVVIAGRP…LRNHLKQSMG (162 aa)) enclose the TrmE-type G domain. Position 226 (Asn-226) interacts with K(+). GTP-binding positions include 226-231 (NAGKSS), 245-251 (TDIAGTT), 270-273 (DTAG), 335-338 (NKAD), and 358-360 (SAR). Ser-230 lines the Mg(2+) pocket. K(+) contacts are provided by Thr-245, Ile-247, and Thr-250. Position 251 (Thr-251) interacts with Mg(2+). Lys-454 provides a ligand contact to (6S)-5-formyl-5,6,7,8-tetrahydrofolate.

This sequence belongs to the TRAFAC class TrmE-Era-EngA-EngB-Septin-like GTPase superfamily. TrmE GTPase family. In terms of assembly, homodimer. Heterotetramer of two MnmE and two MnmG subunits. K(+) serves as cofactor.

It localises to the cytoplasm. Its function is as follows. Exhibits a very high intrinsic GTPase hydrolysis rate. Involved in the addition of a carboxymethylaminomethyl (cmnm) group at the wobble position (U34) of certain tRNAs, forming tRNA-cmnm(5)s(2)U34. The sequence is that of tRNA modification GTPase MnmE from Citrobacter koseri (strain ATCC BAA-895 / CDC 4225-83 / SGSC4696).